A 335-amino-acid chain; its full sequence is uncharacterized protein (335 aa).

Disordered stretches follow at residues 152–179 (IQLP…TVND) and 252–271 (LDLF…SASL). 2 positions are modified to phosphoserine: S257 and S260. Positions 257–271 (SPSSENKSTAGSASL) are enriched in polar residues.

This is an uncharacterized protein from Schizosaccharomyces pombe (strain 972 / ATCC 24843) (Fission yeast).